We begin with the raw amino-acid sequence, 227 residues long: MNLSFFDQFSSPHLLGHPLILLSLLLPALLFPSPGNRWINNRLSTIQLWLLHLITKQLMIPLNKNGHKWALMLTSLMTMLLTINLLGLLPYTFTPTTQLSMNMALAFPLWLATLLTGLRNKPSASLAHLLPEGTPTPLIPALILIETTSLLIRPLALGVRLTANLTAGHLLIQLISTASIALKPILPTVSILTMAILLLLTILEVAVAMIQAYVFVLLLSLYLQENI.

Transmembrane regions (helical) follow at residues 14-34, 69-89, 98-118, 139-159, 167-187, and 190-210; these read LLGH…FPSP, WALM…LGLL, QLSM…LTGL, IPAL…ALGV, AGHL…PILP, and SILT…VAMI.

Belongs to the ATPase A chain family. In terms of assembly, component of the ATP synthase complex composed at least of ATP5F1A/subunit alpha, ATP5F1B/subunit beta, ATP5MC1/subunit c (homooctomer), MT-ATP6/subunit a, MT-ATP8/subunit 8, ATP5ME/subunit e, ATP5MF/subunit f, ATP5MG/subunit g, ATP5MK/subunit k, ATP5MJ/subunit j, ATP5F1C/subunit gamma, ATP5F1D/subunit delta, ATP5F1E/subunit epsilon, ATP5PF/subunit F6, ATP5PB/subunit b, ATP5PD/subunit d, ATP5PO/subunit OSCP. ATP synthase complex consists of a soluble F(1) head domain (subunits alpha(3) and beta(3)) - the catalytic core - and a membrane F(0) domain - the membrane proton channel (subunits c, a, 8, e, f, g, k and j). These two domains are linked by a central stalk (subunits gamma, delta, and epsilon) rotating inside the F1 region and a stationary peripheral stalk (subunits F6, b, d, and OSCP). Interacts with DNAJC30; interaction is direct.

Its subcellular location is the mitochondrion inner membrane. The enzyme catalyses H(+)(in) = H(+)(out). Functionally, subunit a, of the mitochondrial membrane ATP synthase complex (F(1)F(0) ATP synthase or Complex V) that produces ATP from ADP in the presence of a proton gradient across the membrane which is generated by electron transport complexes of the respiratory chain. ATP synthase complex consist of a soluble F(1) head domain - the catalytic core - and a membrane F(1) domain - the membrane proton channel. These two domains are linked by a central stalk rotating inside the F(1) region and a stationary peripheral stalk. During catalysis, ATP synthesis in the catalytic domain of F(1) is coupled via a rotary mechanism of the central stalk subunits to proton translocation. With the subunit c (ATP5MC1), forms the proton-conducting channel in the F(0) domain, that contains two crucial half-channels (inlet and outlet) that facilitate proton movement from the mitochondrial intermembrane space (IMS) into the matrix. Protons are taken up via the inlet half-channel and released through the outlet half-channel, following a Grotthuss mechanism. The protein is ATP synthase F(0) complex subunit a of Anas platyrhynchos (Mallard).